Reading from the N-terminus, the 264-residue chain is Ubiquinone biosynthesis protein COQ4 homolog, mitochondrial (264 aa).

Residues 1-26 constitute a mitochondrion transit peptide; sequence MMQRCWQISLPLARRRLIPSLTSKRT. The Zn(2+) site is built by histidine 169, aspartate 170, histidine 173, and glutamate 185.

The protein belongs to the COQ4 family. Component of a multi-subunit COQ enzyme complex. Requires Zn(2+) as cofactor.

Its subcellular location is the mitochondrion inner membrane. It carries out the reaction a 4-hydroxy-3-methoxy-5-(all-trans-polyprenyl)benzoate + H(+) = a 2-methoxy-6-(all-trans-polyprenyl)phenol + CO2. It functions in the pathway cofactor biosynthesis; ubiquinone biosynthesis. Functionally, lyase that catalyzes the C1-decarboxylation of 4-hydroxy-3-methoxy-5-(all-trans-polyprenyl)benzoic acid into 2-methoxy-6-(all-trans-polyprenyl)phenol during ubiquinone biosynthesis. The chain is Ubiquinone biosynthesis protein COQ4 homolog, mitochondrial from Drosophila grimshawi (Hawaiian fruit fly).